Consider the following 204-residue polypeptide: NADH-quinone oxidoreductase subunit C (204 aa).

Belongs to the complex I 30 kDa subunit family. As to quaternary structure, NDH-1 is composed of 14 different subunits. Subunits NuoB, C, D, E, F, and G constitute the peripheral sector of the complex.

The protein resides in the cell inner membrane. The catalysed reaction is a quinone + NADH + 5 H(+)(in) = a quinol + NAD(+) + 4 H(+)(out). Its function is as follows. NDH-1 shuttles electrons from NADH, via FMN and iron-sulfur (Fe-S) centers, to quinones in the respiratory chain. The immediate electron acceptor for the enzyme in this species is believed to be ubiquinone. Couples the redox reaction to proton translocation (for every two electrons transferred, four hydrogen ions are translocated across the cytoplasmic membrane), and thus conserves the redox energy in a proton gradient. In Polaromonas naphthalenivorans (strain CJ2), this protein is NADH-quinone oxidoreductase subunit C.